The primary structure comprises 556 residues: MKTDIEIAQSVALKPIAEIVEQVGIGFDDIELYGKYKAKLSFDKIEAVKSQKVGKLILVTAINPTPAGEGKSTMSIGLADALNKIGKKTMIALREPSLGPVMGIKGGAAGGGYAQVLPMEDINLHFTGDMHAITTANNALSALLDNHIHQGNELDIDQRRVIWKRVVDLNDRALRQVIVGLGSPVNGIPREDGFDITVASEIMAILCLATDLSDLKKRLSNIVVAYSRNRKPIYVKDLKIEGALTLILKDTIKPNLVQTIYGTPALVHGGPFANIAHGCNSVLATSTALRLADYVVTEAGFGADLGAEKFLDIKTPNLPTSPDAIVIVATLRALKMHGGVSKEDLSQENVEAVKRGFTNLERHVNNMRQYGVPVVVAINQFTADTESEIATLKTLCSNIDVAVELASVWEDGADGGLELAQTVANVIETQSSNYKRLYNDEDTIEEKIKKIVTKIYGGNKVHFGPKAQIQLKEFSDNGWDKMPICMAKTQYSFSDNPNLLGAPTDFDITVREFVPKTGAGFIVALTGDVLTMPGLPKKPAALNMDVLEDGTAIGLF.

An ATP-binding site is contributed by 65–72; it reads TPAGEGKS.

This sequence belongs to the formate--tetrahydrofolate ligase family.

It catalyses the reaction (6S)-5,6,7,8-tetrahydrofolate + formate + ATP = (6R)-10-formyltetrahydrofolate + ADP + phosphate. The protein operates within one-carbon metabolism; tetrahydrofolate interconversion. The protein is Formate--tetrahydrofolate ligase of Streptococcus agalactiae serotype V (strain ATCC BAA-611 / 2603 V/R).